Here is a 294-residue protein sequence, read N- to C-terminus: Ribosomal RNA small subunit methyltransferase A (294 aa).

Positions 29, 31, 56, 77, 107, and 126 each coordinate S-adenosyl-L-methionine.

This sequence belongs to the class I-like SAM-binding methyltransferase superfamily. rRNA adenine N(6)-methyltransferase family. RsmA subfamily.

The protein localises to the cytoplasm. It catalyses the reaction adenosine(1518)/adenosine(1519) in 16S rRNA + 4 S-adenosyl-L-methionine = N(6)-dimethyladenosine(1518)/N(6)-dimethyladenosine(1519) in 16S rRNA + 4 S-adenosyl-L-homocysteine + 4 H(+). Specifically dimethylates two adjacent adenosines (A1518 and A1519) in the loop of a conserved hairpin near the 3'-end of 16S rRNA in the 30S particle. May play a critical role in biogenesis of 30S subunits. The sequence is that of Ribosomal RNA small subunit methyltransferase A from Mycobacterium sp. (strain MCS).